We begin with the raw amino-acid sequence, 345 residues long: MTSKVQLVFLFLFLCVMWASPSAASCDEPSDPMMKQFEEWMAEYGRVYKDNDEKMLRFQIFKNNVNHIETFNNRNGNSYTLGINQFTDMTNNEFVAQYTGLSLPLNIKREPVVSFDDVDISSVPQSIDWRDSGAVTSVKNQGRCGSCWAFASIATVESIYKIKRGNLVSLSEQQVLDCAVSYGCKGGWINKAYSFIISNKGVASAAIYPYKAAKGTCKTNGVPNSAYITRYTYVQRNNERNMMYAVSNQPIAAALDASGNFQHYKRGVFTGPCGTRLNHAIVIIGYGQDSSGKKFWIVRNSWGAGWGEGGYIRLARDVSSSFGLCGIAMDPLYPTLQSGPSVEVI.

A signal peptide spans 1 to 24 (MTSKVQLVFLFLFLCVMWASPSAA). A propeptide spans 25–122 (SCDEPSDPMM…VSFDDVDISS (98 aa)) (activation peptide). 3 disulfides stabilise this stretch: Cys144–Cys184, Cys178–Cys217, and Cys273–Cys325. Cys147 is a catalytic residue. Cys147 is a binding site for E64. Active-site residues include His279 and Asn300.

In terms of tissue distribution, stem (at protein level).

It carries out the reaction Hydrolysis of proteins with broad specificity for peptide bonds. Best reported small molecule substrate Bz-Phe-Val-Arg-|-NHMec, but broader specificity than fruit bromelain.. Strongly inhibited by chicken egg-white cystatin. Inhibited by iodoacetamide and the active-site-directed inhibitor E64 (L-trans-epoxysuccinyl-leucylamide-(4-guanido)-butane). In terms of biological role, cysteine protease. Displays a high level of diversity in substrate specificity at the P1-P1' cleavage site. A hydrophilic P1 residue is preferred, with Gln or Arg strongly preferred. Favors an Ile/Leu residue at the P2 position of substrates, with an overall higher preference for Leu. The optimal tripeptide for cleavage is Pro-Leu-Gln, with cleavage occurring after the Gln residue. Another optimal tripeptide is Val-Leu-Arg, which may imply that a hydrophobic residue at the P3 position of substrates is preferred. The chain is Ananain from Ananas comosus (Pineapple).